Here is a 924-residue protein sequence, read N- to C-terminus: Ubiquitin carboxyl-terminal hydrolase 5 (924 aa).

A DUSP domain is found at Leu-15–Ser-145. The segment covering Thr-64 to Lys-83 has biased composition (polar residues). The tract at residues Thr-64–Arg-87 is disordered. Residues Thr-317–Lys-916 form the USP domain. The active-site Nucleophile is the Cys-326. Residues Arg-648–Ser-667 show a composition bias toward basic and acidic residues. Residues Arg-648–Ser-690 are disordered. His-874 serves as the catalytic Proton acceptor.

This sequence belongs to the peptidase C19 family.

It catalyses the reaction Thiol-dependent hydrolysis of ester, thioester, amide, peptide and isopeptide bonds formed by the C-terminal Gly of ubiquitin (a 76-residue protein attached to proteins as an intracellular targeting signal).. In terms of biological role, recognizes and hydrolyzes the peptide bond at the C-terminal Gly of ubiquitin. Involved in the processing of poly-ubiquitin precursors as well as that of ubiquitinated proteins. The sequence is that of Ubiquitin carboxyl-terminal hydrolase 5 (UBP5) from Arabidopsis thaliana (Mouse-ear cress).